The chain runs to 52 residues: Rubredoxin (52 aa).

The residue at position 1 (Met-1) is an N-formylmethionine; partial. Residues 1–52 (MKKYGCLVCGYVYDPAKGDPDHGIAPGTAFEDLPADWVCPLCGVSKDEFEPL) form the Rubredoxin-like domain. 4 residues coordinate Fe cation: Cys-6, Cys-9, Cys-39, and Cys-42.

It belongs to the rubredoxin family. Fe(3+) is required as a cofactor. Observed in four forms, with and without iron, and with and without formylation at Met-1.

Its function is as follows. Rubredoxin is a small nonheme, iron protein lacking acid-labile sulfide. Its single Fe, chelated to 4 Cys, functions as an electron acceptor and may also stabilize the conformation of the molecule. The polypeptide is Rubredoxin (Heliobacterium mobile (Heliobacillus mobilis)).